The sequence spans 311 residues: Ribonuclease Z (311 aa).

Residues His-61, His-63, Asp-65, His-66, His-148, Asp-216, and His-275 each contribute to the Zn(2+) site. The Proton acceptor role is filled by Asp-65.

It belongs to the RNase Z family. Homodimer. Zn(2+) is required as a cofactor.

The enzyme catalyses Endonucleolytic cleavage of RNA, removing extra 3' nucleotides from tRNA precursor, generating 3' termini of tRNAs. A 3'-hydroxy group is left at the tRNA terminus and a 5'-phosphoryl group is left at the trailer molecule.. Its function is as follows. Zinc phosphodiesterase, which displays some tRNA 3'-processing endonuclease activity. Probably involved in tRNA maturation, by removing a 3'-trailer from precursor tRNA. This Clostridium novyi (strain NT) protein is Ribonuclease Z.